The sequence spans 32 residues: Alcohol dehydrogenase-related 31 kDa protein (32 aa).

11–32 lines the NAD(+) pocket; sequence YVADCGGIALETSXVLMTKNIA.

It belongs to the short-chain dehydrogenases/reductases (SDR) family.

The protein is Alcohol dehydrogenase-related 31 kDa protein (Adhr) of Drosophila yakuba (Fruit fly).